The following is a 90-amino-acid chain: Probable Fe(2+)-trafficking protein (90 aa).

It belongs to the Fe(2+)-trafficking protein family.

Could be a mediator in iron transactions between iron acquisition and iron-requiring processes, such as synthesis and/or repair of Fe-S clusters in biosynthetic enzymes. This is Probable Fe(2+)-trafficking protein from Pseudomonas fluorescens (strain SBW25).